Reading from the N-terminus, the 146-residue chain is Leghemoglobin Lb120-1 (146 aa).

The Globin domain occupies 2–146; that stretch reads GFTEKQEALV…LASAIKKAMN (145 aa). 2 positions are modified to nitrated tyrosine: Tyr-24 and Tyr-29. Heme b is bound at residue Ser-44. Ser-44 is modified (phosphoserine). Residue His-61 coordinates O2. Positions 64, 93, and 96 each coordinate heme b. Tyr-134 is subject to Nitrated tyrosine.

It belongs to the plant globin family. In terms of assembly, monomer. Post-translationally, nitrated in effective nodules and particularly in hypoxic conditions; this mechanism may play a protective role in the symbiosis by buffering toxic peroxynitrite NO(2)(-). Nitration level decrease during nodule senescence. Phosphorylation at Ser-44 disrupts the molecular environment of its porphyrin ring oxygen binding pocket, thus leading to a reduced oxygen consumption and to the delivery of oxygen O(2) to symbiosomes. As to expression, root nodules.

It localises to the cytoplasm. Its subcellular location is the cytosol. The protein localises to the nucleus. In terms of biological role, leghemoglobin that reversibly binds oxygen O(2) through a pentacoordinated heme iron. In root nodules, facilitates the diffusion of oxygen to the bacteroids while preventing the bacterial nitrogenase from being inactivated by buffering dioxygen, nitric oxide and carbon monoxide, and promoting the formation of reactive oxygen species (ROS, e.g. H(2)O(2)). This role is essential for symbiotic nitrogen fixation (SNF). This chain is Leghemoglobin Lb120-1, found in Pisum sativum (Garden pea).